Reading from the N-terminus, the 520-residue chain is Protein-export membrane protein SecD (520 aa).

6 consecutive transmembrane segments (helical) span residues 10-30 (IILL…PTLA), 364-384 (DSLL…FLRY), 391-411 (LPMI…AAGI), 417-437 (LSVI…LVII), 461-481 (FWVI…LAIL), and 483-503 (LGDL…GVLI).

This sequence belongs to the SecD/SecF family. SecD subfamily. In terms of assembly, part of the protein translocation apparatus. Forms a complex with SecF.

It is found in the cell membrane. In terms of biological role, involved in protein export. This is Protein-export membrane protein SecD from Haloquadratum walsbyi (strain DSM 16790 / HBSQ001).